The following is a 1054-amino-acid chain: Translation initiation factor IF-2 (1054 aa).

Disordered regions lie at residues 57 to 213 (DKRK…AASC), 225 to 248 (DPLA…NPGD), 287 to 315 (SGRP…HGLQ), and 401 to 436 (DHAG…KQEL). Residues 92 to 104 (QEPSQAASDVSSP) are compositionally biased toward polar residues. Low complexity predominate over residues 111–213 (EASGAEAAAS…VTSGRRAASC (103 aa)). Residues 401-418 (DHAGRGRELVDVSKNKDK) are compositionally biased toward basic and acidic residues. The tr-type G domain occupies 552–721 (TRPPVVTVMG…VLQAEVLELT (170 aa)). Positions 561 to 568 (GHVDHGKT) are G1. 561–568 (GHVDHGKT) contributes to the GTP binding site. Residues 586-590 (GITQH) form a G2 region. Positions 607-610 (DTPG) are G3. GTP is bound by residues 607–611 (DTPGH) and 661–664 (NKMD). The G4 stretch occupies residues 661-664 (NKMD). Residues 697-699 (SAK) form a G5 region.

The protein belongs to the TRAFAC class translation factor GTPase superfamily. Classic translation factor GTPase family. IF-2 subfamily.

It is found in the cytoplasm. Its function is as follows. One of the essential components for the initiation of protein synthesis. Protects formylmethionyl-tRNA from spontaneous hydrolysis and promotes its binding to the 30S ribosomal subunits. Also involved in the hydrolysis of GTP during the formation of the 70S ribosomal complex. The sequence is that of Translation initiation factor IF-2 (infB) from Stigmatella aurantiaca.